A 443-amino-acid polypeptide reads, in one-letter code: Probable lipase C16A3.12c (443 aa).

Residues 1-16 are Cytoplasmic-facing; the sequence is MSGFNKNQIYWGDYVG. A helical; Signal-anchor for type II membrane protein membrane pass occupies residues 17–37; it reads VIAAFVGVYTELVARIFIYMI. The Lumenal segment spans residues 38–443; it reads PERVREWFRV…KHFVKQNGFH (406 aa). The 295-residue stretch at 116 to 410 folds into the AB hydrolase-1 domain; sequence VVYCHHGLMT…HYEHLDFLWG (295 aa). 2 N-linked (GlcNAc...) asparagine glycosylation sites follow: asparagine 134 and asparagine 177. Serine 210 serves as the catalytic Nucleophile. N-linked (GlcNAc...) asparagine glycans are attached at residues asparagine 304 and asparagine 335. Catalysis depends on charge relay system residues aspartate 378 and histidine 404.

Belongs to the AB hydrolase superfamily. Lipase family.

It localises to the cytoplasm. The protein localises to the vacuole. The protein resides in the membrane. In terms of biological role, probable lipase. This Schizosaccharomyces pombe (strain 972 / ATCC 24843) (Fission yeast) protein is Probable lipase C16A3.12c.